Here is a 192-residue protein sequence, read N- to C-terminus: Ion-translocating oxidoreductase complex subunit A (192 aa).

The next 6 membrane-spanning stretches (helical) occupy residues 5–25, 39–59, 63–83, 102–122, 134–154, and 171–191; these read FLLF…FLGL, VGMS…SYIV, ILLP…VIAV, LLGI…LALL, IIYG…FSSM, and SIAM…TGLI.

Belongs to the NqrDE/RnfAE family. As to quaternary structure, the complex is composed of six subunits: RnfA, RnfB, RnfC, RnfD, RnfE and RnfG.

It localises to the cell inner membrane. In terms of biological role, part of a membrane-bound complex that couples electron transfer with translocation of ions across the membrane. The protein is Ion-translocating oxidoreductase complex subunit A of Psychromonas ingrahamii (strain DSM 17664 / CCUG 51855 / 37).